A 721-amino-acid polypeptide reads, in one-letter code: Putative cullin-like protein 1 (721 aa).

Residues 651–713 (DRRYAIDAAL…RDYLERDTEN (63 aa)) form the Cullin neddylation domain.

It belongs to the cullin family.

In Arabidopsis thaliana (Mouse-ear cress), this protein is Putative cullin-like protein 1.